The following is a 414-amino-acid chain: Protein MAK11 (414 aa).

An N-acetylserine modification is found at serine 2. WD repeat units lie at residues 50 to 78 (AHSLSIKCLAVSRRYLVSGSNDEHIRIYD), 90 to 135 (SHQG…MVWR), 147 to 177 (GHTARVNDVDIHPTNRIAISVSDDHSIRLWN), 189 to 221 (LRKYNTNGTCVRWLGAKGDYFAVGLRDRVLIYE), 238 to 267 (LMHIETHILPFDNKEYLSVGISDGNVHFYP), and 298 to 330 (GHTNRIKDFKFYTNEFGTYLVTIGSDGKIVVWD). Serine 376 and serine 380 each carry phosphoserine. Phosphothreonine is present on threonine 382.

Associates with 60S pre-ribosomal particles.

The protein localises to the nucleus. It localises to the nucleolus. The protein resides in the nucleus membrane. Essential for cell growth. Plays a role in assembly of 60S pre-ribosomal particles in the nucleolus. Also required for replication of the M1 double-stranded RNA of the L-A virus. This latter function may reflect an enhanced requirement for free 60S ribosomal particles for the translation of viral mRNAs which lack poly-A tails. This is Protein MAK11 (MAK11) from Saccharomyces cerevisiae (strain ATCC 204508 / S288c) (Baker's yeast).